The sequence spans 540 residues: tRNA-2-methylthio-N(6)-dimethylallyladenosine synthase (540 aa).

Positions arginine 4 to histidine 120 constitute an MTTase N-terminal domain. Residues cysteine 13, cysteine 49, cysteine 83, cysteine 157, cysteine 161, and cysteine 164 each contribute to the [4Fe-4S] cluster site. A Radical SAM core domain is found at arginine 143–glutamate 374. The TRAM domain occupies arginine 376–leucine 468. Residues tryptophan 480 to arginine 540 are disordered. Composition is skewed to low complexity over residues alanine 492–proline 502 and glycine 520–alanine 533.

The protein belongs to the methylthiotransferase family. MiaB subfamily. As to quaternary structure, monomer. [4Fe-4S] cluster serves as cofactor.

The protein resides in the cytoplasm. It catalyses the reaction N(6)-dimethylallyladenosine(37) in tRNA + (sulfur carrier)-SH + AH2 + 2 S-adenosyl-L-methionine = 2-methylsulfanyl-N(6)-dimethylallyladenosine(37) in tRNA + (sulfur carrier)-H + 5'-deoxyadenosine + L-methionine + A + S-adenosyl-L-homocysteine + 2 H(+). In terms of biological role, catalyzes the methylthiolation of N6-(dimethylallyl)adenosine (i(6)A), leading to the formation of 2-methylthio-N6-(dimethylallyl)adenosine (ms(2)i(6)A) at position 37 in tRNAs that read codons beginning with uridine. The chain is tRNA-2-methylthio-N(6)-dimethylallyladenosine synthase from Frankia casuarinae (strain DSM 45818 / CECT 9043 / HFP020203 / CcI3).